The chain runs to 499 residues: MCELYSKQDTLALRERHIGPSCKIFFAADPIKIMRAQGQYMFDEKGERYLDCINNVAHVGHCHPEVVKAAAKQMELLNTNSRFLHDNIIEFAKRLTATLPQELSVCYFTNSGSEANDLALRLARQFRGHQDVITLDHAYHGHLSSLIEISPYKFQKGKDVKRETVHVAPAPDTYRGKYREDHEDPSTAYADEVKKIIEEAHSSGRKIAAFIAESMQSCGGQIIPPAGYFQKVAEHIHKAGGVFIADEVQVGFGRVGRYFWSFQMYGEDFVPDIVTMGKPMGNGHPISCVVTTKEIAEAFSSSGMEYFNTYGGNPVSCAVGLAVLDVIEKENLQGNAVRVGTYLMELLSEQKAKHPLIGDIRGVGLFIGIDLVKDREKRTPATAEAQHIIYEMKGKGVLLSADGPHRNVLKIKPPMCFTEDDAKFLVDHLDGILTVLEEAMDSKSGTVFSENTAYRTKMPKEIQVELPNLSATEAREIPRGKRNGVCSDQQALLSKRLKT.

Lys-278 is subject to N6-(pyridoxal phosphate)lysine.

This sequence belongs to the class-III pyridoxal-phosphate-dependent aminotransferase family. Homotetramer. Pyridoxal 5'-phosphate is required as a cofactor.

It is found in the mitochondrion. It catalyses the reaction phosphoethanolamine + H2O = acetaldehyde + NH4(+) + phosphate. In terms of biological role, catalyzes the pyridoxal-phosphate-dependent breakdown of phosphoethanolamine, converting it to ammonia, inorganic phosphate and acetaldehyde. This chain is Ethanolamine-phosphate phospho-lyase (Etnppl), found in Mus musculus (Mouse).